We begin with the raw amino-acid sequence, 347 residues long: Microneme protein 21 (347 aa).

The protein localises to the cytoplasmic vesicle. Its subcellular location is the secretory vesicle. It is found in the microneme. The protein resides in the secreted. This is Microneme protein 21 from Toxoplasma gondii.